The primary structure comprises 439 residues: ATP-dependent RNA helicase RhlB (439 aa).

The Q motif signature appears at 9 to 37 (QKFADLPLHPEVKQALAENGFEFCTPIQA). One can recognise a Helicase ATP-binding domain in the interval 40 to 219 (LPVLLQSKDI…YDHMNEPVKV (180 aa)). An ATP-binding site is contributed by 53-60 (AQTGTGKT). The DEAD box motif lies at 165-168 (DEAD). A Helicase C-terminal domain is found at 243-390 (KMRLLLTLIE…VSNYDRDALL (148 aa)). The interval 395–439 (PPVKIHRRHPAGARNLRERSGAGRPQGAHRSGGRPPRHDRTRRQP) is disordered. Over residues 425–439 (SGGRPPRHDRTRRQP) the composition is skewed to basic residues.

This sequence belongs to the DEAD box helicase family. RhlB subfamily. In terms of assembly, component of the RNA degradosome, which is a multiprotein complex involved in RNA processing and mRNA degradation.

The protein localises to the cytoplasm. The catalysed reaction is ATP + H2O = ADP + phosphate + H(+). Functionally, DEAD-box RNA helicase involved in RNA degradation. Has RNA-dependent ATPase activity and unwinds double-stranded RNA. This chain is ATP-dependent RNA helicase RhlB, found in Shewanella sp. (strain ANA-3).